Consider the following 363-residue polypeptide: Elongation factor Tu, chloroplastic (363 aa).

In terms of domain architecture, tr-type G spans 1–189 (TLTAAITMAL…NVDEYIPTPE (189 aa)). Residues 55-59 (DCPGH) and 110-113 (NKED) contribute to the GTP site.

This sequence belongs to the TRAFAC class translation factor GTPase superfamily. Classic translation factor GTPase family. EF-Tu/EF-1A subfamily.

The protein resides in the plastid. It is found in the chloroplast. The enzyme catalyses GTP + H2O = GDP + phosphate + H(+). Its function is as follows. GTP hydrolase that promotes the GTP-dependent binding of aminoacyl-tRNA to the A-site of ribosomes during protein biosynthesis. The polypeptide is Elongation factor Tu, chloroplastic (tufA) (Gymnochlora stellata).